A 193-amino-acid chain; its full sequence is Potassium-transporting ATPase KdpC subunit (193 aa).

Residues 14–34 form a helical membrane-spanning segment; sequence ITFTFLVLCGLVYPLIVTGIA.

The protein belongs to the KdpC family. The system is composed of three essential subunits: KdpA, KdpB and KdpC.

The protein resides in the cell membrane. Functionally, part of the high-affinity ATP-driven potassium transport (or Kdp) system, which catalyzes the hydrolysis of ATP coupled with the electrogenic transport of potassium into the cytoplasm. This subunit acts as a catalytic chaperone that increases the ATP-binding affinity of the ATP-hydrolyzing subunit KdpB by the formation of a transient KdpB/KdpC/ATP ternary complex. The polypeptide is Potassium-transporting ATPase KdpC subunit (Bacillus cereus (strain ATCC 10987 / NRS 248)).